The primary structure comprises 126 residues: Large ribosomal subunit protein eL8 (126 aa).

This sequence belongs to the eukaryotic ribosomal protein eL8 family. As to quaternary structure, part of the 50S ribosomal subunit. Probably part of the RNase P complex.

It is found in the cytoplasm. Its function is as follows. Multifunctional RNA-binding protein that recognizes the K-turn motif in ribosomal RNA, the RNA component of RNase P, box H/ACA, box C/D and box C'/D' sRNAs. This is Large ribosomal subunit protein eL8 from Cenarchaeum symbiosum (strain A).